The following is a 398-amino-acid chain: MEKTIEDPPTSAVLLDHCHFSQVIFNSVEKFYIPGGDVTCRYTFTQNFIPRQKDWIGIFRVGWKTVREYYTFMWVTLPIDLNNKSAKQQEVQFKAYYLPKDDEYYQFCYVDQDGVVRGASIPFQFRPENEEDILVVTTQGEVEEIEQHNKELCKENQELKDSCVSLQKQNSDMQAELQKKQEELETLQSINKKLELKVKEQKDYWETEQLEHLKKENGHLFLSLTEQRKDQKKLEQTVEEMKQNETTAMKKQQELMDENFDLSRRLSEKKMIYNALQREKERLEGENDLLKRENSRLLSYMGLDFNSLPYQVPTSDEGGAGQNPGLVYGNPYSGIQESSSPSQLSIKKCPICKADDICDHTLEQQQMQALCLNCPICDKIFPATEKQIFEDHVFCHSL.

The short motif at Ile133 to Val136 is the CLIR element. The stretch at Thr137–Met301 forms a coiled coil. An LIR-like motif is present at residues Asp203–Glu206. The interval Thr314 to Pro341 is disordered. The interaction with LGALS8 stretch occupies residues Asn323–Ser333. Residues Lys347–Leu398 are interaction with MYO6. Residues Cys371 to His396 form a UBZ1-type zinc finger. Residues Cys374, Cys377, His392, and His396 each contribute to the Zn(2+) site. Ser397 bears the Phosphoserine mark.

It belongs to the CALCOCO family. As to quaternary structure, dimer. Part of a complex consisting of CALCOCO2, TAX1BP1 and MYO6. Interacts with MYO6. Interacts with GEMIN4. Interacts with ATG8 family members MAP1LC3A, MAP1LC3B, GABARAP, GABARAPL1 and GABARAPL2. Interacts with ATG8 family member MAP1LC3C. Interacts with LGALS8. Interacts with TOM1; the interaction is indirect and is mediated by MYO6, which acts as a bridge between TOM1 and CALCOCO2. Interacts with AZI2.

The protein resides in the cytoplasm. The protein localises to the perinuclear region. Its subcellular location is the cytoskeleton. It localises to the cytoplasmic vesicle. It is found in the autophagosome membrane. Xenophagy-specific receptor required for autophagy-mediated intracellular bacteria degradation. Acts as an effector protein of galectin-sensed membrane damage that restricts the proliferation of infecting pathogens upon entry into the cytosol by targeting LGALS8-associated bacteria for autophagy. Initially orchestrates bacteria targeting to autophagosomes and subsequently ensures pathogen degradation by regulating pathogen-containing autophagosome maturation. Bacteria targeting to autophagosomes relies on its interaction with MAP1LC3A, MAP1LC3B and/or GABARAPL2, whereas regulation of pathogen-containing autophagosome maturation requires the interaction with MAP3LC3C. May play a role in ruffle formation and actin cytoskeleton organization and seems to negatively regulate constitutive secretion. This is Calcium-binding and coiled-coil domain-containing protein 2 from Macaca fascicularis (Crab-eating macaque).